Reading from the N-terminus, the 1207-residue chain is DNA-directed RNA polymerase subunit beta' (1207 aa).

Residues Cys60, Cys62, Cys75, and Cys78 each coordinate Zn(2+). Residues Asp450, Asp452, and Asp454 each coordinate Mg(2+). Zn(2+) contacts are provided by Cys818, Cys892, Cys899, and Cys902.

It belongs to the RNA polymerase beta' chain family. In terms of assembly, the RNAP catalytic core consists of 2 alpha, 1 beta, 1 beta' and 1 omega subunit. When a sigma factor is associated with the core the holoenzyme is formed, which can initiate transcription. Mg(2+) is required as a cofactor. Zn(2+) serves as cofactor.

The enzyme catalyses RNA(n) + a ribonucleoside 5'-triphosphate = RNA(n+1) + diphosphate. DNA-dependent RNA polymerase catalyzes the transcription of DNA into RNA using the four ribonucleoside triphosphates as substrates. In Lactococcus lactis subsp. cremoris (strain SK11), this protein is DNA-directed RNA polymerase subunit beta'.